Consider the following 83-residue polypeptide: Erabutoxin b (83 aa).

The signal sequence occupies residues 1–21 (MKTLLLTLVVVTIVCLDLGYT). Positions 24-38 (CFNHQSSQPQTTKTC) are loop I. Intrachain disulfides connect Cys-24–Cys-45, Cys-38–Cys-62, Cys-64–Cys-75, and Cys-76–Cys-81. The stretch between loop I and loop II stretch occupies residues 39–44 (SPGESS). The tract at residues 45-62 (CYHKQWSDFRGTIIERGC) is loop II. Residues 64–75 (CPTVKPGIKLSC) form a loop III region.

It belongs to the three-finger toxin family. Short-chain subfamily. Type I alpha-neurotoxin sub-subfamily. As to expression, expressed by the venom gland.

The protein localises to the secreted. In terms of biological role, binds with high affinity to muscular nicotinic acetylcholine receptors (nAChRs) (tested on Torpedo marmorata, Kd=0.07 nM), and with low affinity to neuronal alpha-7/CHRNA7 nAChRs (tested on chimeric alpha-7/CHRNA7, Kd=22 uM) and inhibit acetylcholine from binding to the receptor, thereby impairing neuromuscular transmission. Produces peripheral paralysis by blocking neuromuscular transmission at the postsynaptic site. The sequence is that of Erabutoxin b from Laticauda semifasciata (Black-banded sea krait).